Reading from the N-terminus, the 269-residue chain is Protein SET (269 aa).

Positions 1 to 33 (MSSVPKRAKLDGAPADGNTSAAAGNNEEESEAL) are disordered. 3 positions are modified to phosphoserine: Ser30, Ser148, and Ser152. The interval 227 to 269 (LVPDIEVEPEDEEDNEDNDEEAFDDEDGEDGEGEEEEEDEDDK) is disordered. Positions 231–269 (IEVEPEDEEDNEDNDEEAFDDEDGEDGEGEEEEEDEDDK) are enriched in acidic residues.

This sequence belongs to the nucleosome assembly protein (NAP) family. As to quaternary structure, interacts specifically with B-type cyclins.

The chain is Protein SET (Set) from Drosophila melanogaster (Fruit fly).